The chain runs to 403 residues: Synaptotagmin-7 (403 aa).

Residues M1–D16 lie on the Vesicular side of the membrane. A helical membrane pass occupies residues V17–L37. At C38–A403 the chain is on the cytoplasmic side. At S52 the chain carries Phosphoserine. A disordered region spans residues L53–D106. T58 is subject to Phosphothreonine. The residue at position 61 (S61) is a Phosphoserine. Residues P90–P100 are compositionally biased toward basic and acidic residues. A phosphoserine mark is found at S119 and S122. 2 consecutive C2 domains span residues N135–K255 and S266–H399. 12 residues coordinate Ca(2+): D166, D172, D225, D227, S230, D233, D297, D303, D357, D359, S362, and D365.

This sequence belongs to the synaptotagmin family. In terms of assembly, homodimer. Can also form heterodimers with SYT6, SYT9 and SYT10. Interacts with calmodulin (CALM1, CALM2 or CALM3). Interacts with CD63; required for localization to lysosomes. Interacts with APP. Ca(2+) is required as a cofactor. Post-translationally, palmitoylated at its vesicular N-terminus; palmitoylation is required for localization to lysosome and phagocytosis in macrophages. In terms of tissue distribution, expressed in a variety of adult and fetal tissues.

The protein resides in the cell membrane. It localises to the presynaptic cell membrane. It is found in the cytoplasmic vesicle. Its subcellular location is the secretory vesicle. The protein localises to the synaptic vesicle membrane. The protein resides in the lysosome membrane. It localises to the phagosome membrane. It is found in the peroxisome membrane. Its subcellular location is the secretory vesicle membrane. Functionally, ca(2+) sensor involved in Ca(2+)-dependent exocytosis of secretory and synaptic vesicles through Ca(2+) and phospholipid binding to the C2 domain. Ca(2+) induces binding of the C2-domains to phospholipid membranes and to assembled SNARE-complexes; both actions contribute to triggering exocytosis. SYT7 binds Ca(2+) with high affinity and slow kinetics compared to other synaptotagmins. Involved in Ca(2+)-triggered lysosomal exocytosis, a major component of the plasma membrane repair. Ca(2+)-regulated delivery of lysosomal membranes to the cell surface is also involved in the phagocytic uptake of particles by macrophages. Ca(2+)-triggered lysosomal exocytosis also plays a role in bone remodeling by regulating secretory pathways in osteoclasts and osteoblasts. In case of infection, involved in participates cell invasion by Trypanosoma cruzi via Ca(2+)-triggered lysosomal exocytosis. Involved in cholesterol transport from lysosome to peroxisome by promoting membrane contacts between lysosomes and peroxisomes: probably acts by promoting vesicle fusion by binding phosphatidylinositol-4,5-bisphosphate on peroxisomal membranes. Acts as a key mediator of synaptic facilitation, a process also named short-term synaptic potentiation: synaptic facilitation takes place at synapses with a low initial release probability and is caused by influx of Ca(2+) into the axon terminal after spike generation, increasing the release probability of neurotransmitters. Probably mediates synaptic facilitation by directly increasing the probability of release. May also contribute to synaptic facilitation by regulating synaptic vesicle replenishment, a process required to ensure that synaptic vesicles are ready for the arrival of the next action potential: SYT7 is required for synaptic vesicle replenishment by acting as a sensor for Ca(2+) and by forming a complex with calmodulin. Also acts as a regulator of Ca(2+)-dependent insulin and glucagon secretion in beta-cells. Triggers exocytosis by promoting fusion pore opening and fusion pore expansion in chromaffin cells. Also regulates the secretion of some non-synaptic secretory granules of specialized cells. This is Synaptotagmin-7 from Homo sapiens (Human).